The chain runs to 259 residues: Flagellar L-ring protein 1 (259 aa).

Residues methionine 1–glycine 15 form the signal peptide. Cysteine 16 carries N-palmitoyl cysteine lipidation. The S-diacylglycerol cysteine moiety is linked to residue cysteine 16. Positions glutamate 38–aspartate 63 are disordered.

This sequence belongs to the FlgH family. The basal body constitutes a major portion of the flagellar organelle and consists of four rings (L,P,S, and M) mounted on a central rod.

It localises to the cell outer membrane. The protein resides in the bacterial flagellum basal body. Functionally, assembles around the rod to form the L-ring and probably protects the motor/basal body from shearing forces during rotation. This Vibrio parahaemolyticus serotype O3:K6 (strain RIMD 2210633) protein is Flagellar L-ring protein 1 (flgH1).